A 789-amino-acid polypeptide reads, in one-letter code: Polyribonucleotide nucleotidyltransferase (789 aa).

Mg(2+) is bound by residues D494 and D500. The region spanning 561–620 (PRIESIFINKDKIRNVIGSGGKNIREICEKTGARVEIMQDGTVMIYAINNDAVEYAKNMI) is the KH domain. The 68-residue stretch at 630–697 (GKVFDGTVIE…DREYVQLSMR (68 aa)) folds into the S1 motif domain. The tract at residues 709 to 789 (GELYNIRKTN…NEVPRKPRFF (81 aa)) is disordered. Residues 737 to 749 (SEKKRRGSGRSRR) are compositionally biased toward basic residues. Residues 763–780 (NNGFGNGNRSFNDNRNGN) are compositionally biased toward low complexity.

This sequence belongs to the polyribonucleotide nucleotidyltransferase family. The cofactor is Mg(2+).

The protein resides in the cytoplasm. It catalyses the reaction RNA(n+1) + phosphate = RNA(n) + a ribonucleoside 5'-diphosphate. Functionally, involved in mRNA degradation. Catalyzes the phosphorolysis of single-stranded polyribonucleotides processively in the 3'- to 5'-direction. The polypeptide is Polyribonucleotide nucleotidyltransferase (Ehrlichia ruminantium (strain Gardel)).